Here is a 486-residue protein sequence, read N- to C-terminus: F-box protein At1g80960 (486 aa).

The F-box domain maps to 49–97; the sequence is VDWISKLPDDVLLIILSRLSTEEAIRTSVVSKRWEHVWNQMSHLVFDMR.

The polypeptide is F-box protein At1g80960 (Arabidopsis thaliana (Mouse-ear cress)).